A 127-amino-acid polypeptide reads, in one-letter code: Protein HI_1253 (127 aa).

Transmembrane regions (helical) follow at residues 13–33 (VIML…LLVI), 61–81 (LIVS…WWLV), 82–102 (AKFA…SKKV), and 107–127 (SIFF…AYLK).

It belongs to the SirB2 family.

Its subcellular location is the cell inner membrane. The sequence is that of Protein HI_1253 from Haemophilus influenzae (strain ATCC 51907 / DSM 11121 / KW20 / Rd).